A 135-amino-acid polypeptide reads, in one-letter code: Class I hydrophobin 15 (135 aa).

The first 21 residues, 1 to 21 (MFAKSATIAIVLAALAGFSAA), serve as a signal peptide directing secretion. Cystine bridges form between C50–C113, C57–C107, C58–C97, and C114–C127. N131 is a glycosylation site (N-linked (GlcNAc...) asparagine).

Belongs to the fungal hydrophobin family. As to quaternary structure, self-assembles to form functional amyloid fibrils called rodlets. Self-assembly into fibrillar rodlets occurs spontaneously at hydrophobic:hydrophilic interfaces and the rodlets further associate laterally to form amphipathic monolayers.

It localises to the secreted. It is found in the cell wall. Aerial growth, conidiation, and dispersal of filamentous fungi in the environment rely upon a capability of their secreting small amphipathic proteins called hydrophobins (HPBs) with low sequence identity. Class I can self-assemble into an outermost layer of rodlet bundles on aerial cell surfaces, conferring cellular hydrophobicity that supports fungal growth, development and dispersal; whereas Class II form highly ordered films at water-air interfaces through intermolecular interactions but contribute nothing to the rodlet structure. The polypeptide is Class I hydrophobin 15 (Pleurotus ostreatus (strain PC15) (Oyster mushroom)).